The following is a 1043-amino-acid chain: Ras guanine nucleotide exchange factor S (1043 aa).

Residues 109-142 (IETLQTQRRQSTLNIQALQINNELQQQLQQQQQL) adopt a coiled-coil conformation. 4 stretches are compositionally biased toward low complexity: residues 135 to 145 (QLQQQQQLPPI), 245 to 258 (LSPLLNGGASGLSS), 266 to 281 (SKNQLNSSSGSNNSSS), and 293 to 307 (NNNNSSGNQSASNSS). 2 disordered regions span residues 135–160 (QLQQQQQLPPIDQLPPPPTSTSTSTI) and 245–316 (LSPL…HQSQ). Positions 404 to 434 (LAVSLQNVEGLQNIAENLEDETLNLLDLVNE) form a coiled coil. The N-terminal Ras-GEF domain maps to 645–768 (KDGSILKVTL…LLRGLLDKMI (124 aa)). In terms of domain architecture, Ras-GEF spans 803–1043 (SAQSIAQQLT…YDLSIALEPK (241 aa)).

In terms of biological role, promotes the exchange of Ras-bound GDP by GTP. The polypeptide is Ras guanine nucleotide exchange factor S (gefS) (Dictyostelium discoideum (Social amoeba)).